Reading from the N-terminus, the 189-residue chain is Large ribosomal subunit protein bL12c (189 aa).

Disordered stretches follow at residues Met1–Pro30 and Glu165–Val189. Residues Met1–Ala56 constitute a chloroplast transit peptide. The span at Asn11–Phe24 shows a compositional bias: polar residues. Basic and acidic residues predominate over residues Glu165–Gly183.

Component of the chloroplast large ribosomal subunit (LSU). Mature 70S chloroplast ribosomes of higher plants consist of a small (30S) and a large (50S) subunit. The 30S small subunit contains 1 molecule of ribosomal RNA (16S rRNA) and 24 different proteins. The 50S large subunit contains 3 rRNA molecules (23S, 5S and 4.5S rRNA) and 33 different proteins.

It localises to the plastid. The protein resides in the chloroplast. Functionally, component of the chloroplast ribosome (chloro-ribosome), a dedicated translation machinery responsible for the synthesis of chloroplast genome-encoded proteins, including proteins of the transcription and translation machinery and components of the photosynthetic apparatus. This chain is Large ribosomal subunit protein bL12c (RPL12), found in Spinacia oleracea (Spinach).